Consider the following 178-residue polypeptide: Endoribonuclease YbeY (178 aa).

Positions 118, 122, and 128 each coordinate Zn(2+). A disordered region spans residues 158–178; sequence ADRQSEKDRRLLDKSRYFDEP.

The protein belongs to the endoribonuclease YbeY family. Requires Zn(2+) as cofactor.

The protein localises to the cytoplasm. In terms of biological role, single strand-specific metallo-endoribonuclease involved in late-stage 70S ribosome quality control and in maturation of the 3' terminus of the 16S rRNA. In Mycolicibacterium smegmatis (strain ATCC 700084 / mc(2)155) (Mycobacterium smegmatis), this protein is Endoribonuclease YbeY.